A 275-amino-acid polypeptide reads, in one-letter code: Large ribosomal subunit protein uL2 (275 aa).

Residues Q220–K275 are disordered. Positions F257–K275 are enriched in basic residues.

Belongs to the universal ribosomal protein uL2 family. As to quaternary structure, part of the 50S ribosomal subunit. Forms a bridge to the 30S subunit in the 70S ribosome.

One of the primary rRNA binding proteins. Required for association of the 30S and 50S subunits to form the 70S ribosome, for tRNA binding and peptide bond formation. It has been suggested to have peptidyltransferase activity; this is somewhat controversial. Makes several contacts with the 16S rRNA in the 70S ribosome. This Wolinella succinogenes (strain ATCC 29543 / DSM 1740 / CCUG 13145 / JCM 31913 / LMG 7466 / NCTC 11488 / FDC 602W) (Vibrio succinogenes) protein is Large ribosomal subunit protein uL2.